The following is a 446-amino-acid chain: MKNHVQTHNKSLDEINNTVSINTHGKFSQKLFSFLGPGLLVAVGYMDPGNWITSMQGGAQFGYILLFVILLSSLSAMLLQSMTIRLGISTGMDLAQATKHYLNKPVAFVFWIIAELAIIATDIAEVIGSAIALDLLFGIPLLVGALITVFDVFLLLFIMRFGFRKIEAIVGTLIFTVLVIFVFEVFIASPHVTEVLNGFVPSSTIITDNGALFIALGIIGATIMPHNLYLHSSIVQSRMYDRNSIQSKAHAIKYATMDSNIQLSIAFIVNCLLLVLGAALFFGVNTEQLGGFYDLYNALQNQPLLGASLGAIMSTLFAIALLASGQNSTITGTMAGQIVMEGFINLKIPNWLRRLITRLIAILPIIICLIVFNSNEAKMEQLLVFSQVFLSLALPFSLIPLQLSTNDKRLMGQFKNKLWVNIISWCLIIILSILNIYLIIQTFQEL.

The next 11 membrane-spanning stretches (helical) occupy residues 32-52 (FSFL…GNWI), 59-79 (AQFG…AMLL), 107-127 (AFVF…AEVI), 139-159 (IPLL…LFIM), 168-188 (AIVG…VFIA), 210-230 (GALF…NLYL), 264-284 (SIAF…FFGV), 303-323 (PLLG…ALLA), 355-375 (LITR…FNSN), 381-401 (QLLV…LIPL), and 420-440 (VNII…YLII).

This sequence belongs to the NRAMP family.

It localises to the cell membrane. H(+)-stimulated, divalent metal cation uptake system. The protein is Divalent metal cation transporter MntH of Staphylococcus saprophyticus subsp. saprophyticus (strain ATCC 15305 / DSM 20229 / NCIMB 8711 / NCTC 7292 / S-41).